The primary structure comprises 701 residues: Ubiquitin thioesterase zranb1-B (701 aa).

RanBP2-type zinc fingers lie at residues 3–33 (EDGI…PRPS), 79–108 (TSSK…QRRT), and 143–173 (IKGQ…PTPN). Residues cysteine 10, cysteine 13, cysteine 24, cysteine 27, cysteine 85, cysteine 88, cysteine 99, and cysteine 102 each contribute to the Zn(2+) site. Residues 108–121 (TRSPTESPQSSGSG) are compositionally biased toward polar residues. Positions 108-129 (TRSPTESPQSSGSGLRSIPGPI) are disordered. Zn(2+) contacts are provided by cysteine 150, cysteine 153, cysteine 164, and cysteine 167. The segment at 197–220 (RWRGGCSSSNSQRRSPPTSKRDSD) is disordered. The segment covering 202–214 (CSSSNSQRRSPPT) has biased composition (polar residues). ANK repeat units follow at residues 253–283 (RKTD…SGGD) and 306–333 (YTLV…QHAA). Positions 425–585 (LYALWNRTAG…RGHFSALVAM (161 aa)) constitute an OTU domain. The active-site Nucleophile is the cysteine 436. Residue histidine 578 is the Proton acceptor of the active site.

Belongs to the peptidase C64 family.

The protein resides in the cytoplasm. It is found in the nucleus. It carries out the reaction Thiol-dependent hydrolysis of ester, thioester, amide, peptide and isopeptide bonds formed by the C-terminal Gly of ubiquitin (a 76-residue protein attached to proteins as an intracellular targeting signal).. In terms of biological role, ubiquitin thioesterase, which specifically hydrolyzes 'Lys-29'-linked and 'Lys-33'-linked diubiquitin. Also cleaves 'Lys-63'-linked chains, but with 40-fold less efficiency compared to 'Lys-29'-linked ones. Positive regulator of the Wnt signaling pathway that deubiquitinates apc protein, a negative regulator of Wnt-mediated transcription. Acts as a regulator of autophagy by mediating deubiquitination of pik3c3/vps34, thereby promoting autophagosome maturation. Plays a role in the regulation of cell morphology and cytoskeletal organization. Required in the stress fiber dynamics and cell migration. This Xenopus laevis (African clawed frog) protein is Ubiquitin thioesterase zranb1-B (zranb1-b).